The primary structure comprises 550 residues: Glutamine--tRNA ligase (550 aa).

The 'HIGH' region motif lies at 34 to 44; it reads PEPNGYLHLGH. Residues 35–37 and 41–47 each bind ATP; these read EPN and HLGHAKS. Residues Asp-67 and Tyr-212 each contribute to the L-glutamine site. ATP contacts are provided by residues Thr-231, 261-262, and 269-271; these read RL and LSK. Positions 268 to 272 match the 'KMSKS' region motif; sequence VLSKR.

The protein belongs to the class-I aminoacyl-tRNA synthetase family. In terms of assembly, monomer.

It is found in the cytoplasm. The catalysed reaction is tRNA(Gln) + L-glutamine + ATP = L-glutaminyl-tRNA(Gln) + AMP + diphosphate. In Buchnera aphidicola subsp. Baizongia pistaciae (strain Bp), this protein is Glutamine--tRNA ligase.